The primary structure comprises 338 residues: Formamidase (338 aa).

Positions 14–257 (VGIGLVQLQL…NEIITAEVRP (244 aa)) constitute a CN hydrolase domain. The Proton acceptor role is filled by glutamate 60. Residue lysine 129 is the Proton donor of the active site. Cysteine 162 serves as the catalytic Nucleophile.

This sequence belongs to the carbon-nitrogen hydrolase superfamily. Aliphatic amidase family.

The enzyme catalyses formamide + H2O = formate + NH4(+). Functionally, is an aliphatic amidase with a restricted substrate specificity, as it only hydrolyzes formamide. The protein is Formamidase of Allorhizobium ampelinum (strain ATCC BAA-846 / DSM 112012 / S4) (Agrobacterium vitis (strain S4)).